A 94-amino-acid polypeptide reads, in one-letter code: YcgL domain-containing protein VP0875 (94 aa).

A YcgL domain is found at 1-84 (MLCSIYKSSK…PPENLLEKYK (84 aa)).

In Vibrio parahaemolyticus serotype O3:K6 (strain RIMD 2210633), this protein is YcgL domain-containing protein VP0875.